A 53-amino-acid polypeptide reads, in one-letter code: Lantibiotic mutacin-2 (53 aa).

A propeptide spanning residues 1-26 (MNKLNSNAVVSLNEVSDSELDTILGG) is cleaved from the precursor. A cross-link (beta-methyllanthionine (Thr-Cys)) is located at residues 36–41 (TVSYEC). Cross-links (lanthionine (Ser-Cys)) lie at residues 38-52 (SYECRMNSWQHVFTC) and 45-53 (SWQHVFTCC). T51 is modified (2,3-didehydrobutyrine).

Post-translationally, maturation of lantibiotics involves the enzymatic conversion of Thr, and Ser into dehydrated AA and the formation of thioether bonds with cysteine. This is followed by membrane translocation and cleavage of the modified precursor. It is not established whether the 2,3-didehydrobutyrine is the E- or Z-isomer.

Functionally, lanthionine-containing peptide antibiotic (lantibiotic) active on Gram-positive bacteria including M.luteus, S.aureus, Streptococcus, P.micros, P.acidilactici, C.sporogenes, C.diphtheriae, A.viscosus, G.vaginalis, P.acnes, L.monocytogenes and M.smegmatis, and Gram-negative bacteria including C.jejuni, H.pylori and N.gonorrhoeae. Transiently and partially depolarizes the transmembrane electrical potential and pH gradient of susceptible cells, inhibits the uptake of amino acids and depletes the intracellular ATP pool. In Streptococcus mutans, this protein is Lantibiotic mutacin-2.